A 683-amino-acid chain; its full sequence is ATP-dependent zinc metalloprotease FtsH (683 aa).

The interval 1–43 (MEDKNIKDDEILDDQNDNQEDVQNQDEEKEIKPKKPKKKVYIS) is disordered. The Cytoplasmic segment spans residues 1 to 70 (MEDKNIKDDE…KNNNISFRVK (70 aa)). Positions 10-28 (EILDDQNDNQEDVQNQDEE) are enriched in acidic residues. Residues 71-91 (PPIFFFLILILMSTLFYFYGN) traverse the membrane as a helical segment. The Periplasmic portion of the chain corresponds to 92-174 (KTALFQEKRE…IVVLGTPVSS (83 aa)). A helical transmembrane segment spans residues 175–195 (IITRAIFSFAPLFMLLFFFYF). The Cytoplasmic segment spans residues 196 to 683 (INKKMMGSSG…LDDEQLEKYY (488 aa)). 270–277 (GEPGTGKT) is an ATP binding site. Position 494 (histidine 494) interacts with Zn(2+). Glutamate 495 is an active-site residue. 2 residues coordinate Zn(2+): histidine 498 and aspartate 569.

It in the central section; belongs to the AAA ATPase family. The protein in the C-terminal section; belongs to the peptidase M41 family. As to quaternary structure, homohexamer. Requires Zn(2+) as cofactor.

It is found in the cell inner membrane. Its function is as follows. Acts as a processive, ATP-dependent zinc metallopeptidase for both cytoplasmic and membrane proteins. Plays a role in the quality control of integral membrane proteins. The sequence is that of ATP-dependent zinc metalloprotease FtsH from Streptobacillus moniliformis (strain ATCC 14647 / DSM 12112 / NCTC 10651 / 9901).